The following is a 423-amino-acid chain: ATP-citrate synthase alpha chain protein 2 (423 aa).

Residues Asn343, Thr345, and Arg376 each contribute to the citrate site.

It belongs to the succinate/malate CoA ligase beta subunit family. As to quaternary structure, heterooctamer of 4 alpha and 4 beta chains.

The protein localises to the cytoplasm. It is found in the cytosol. The enzyme catalyses oxaloacetate + acetyl-CoA + ADP + phosphate = citrate + ATP + CoA. Its function is as follows. ATP citrate-lyase is the primary enzyme responsible for the synthesis of cytosolic acetyl-CoA, used for the elongation of fatty acids and biosynthesis of isoprenoids, flavonoids and malonated derivatives. May supply substrate to the cytosolic acetyl-CoA carboxylase, which generates the malonyl-CoA used for the synthesis of a multitude of compounds, including very long chain fatty acids and flavonoids. Required for normal growth and development and elongation of C18 fatty acids to C20 to C24 fatty acids in seeds. In contrast to all known animal ACL enzymes having a homomeric structure, plant ACLs are composed of alpha and beta chains. This Arabidopsis thaliana (Mouse-ear cress) protein is ATP-citrate synthase alpha chain protein 2 (ACLA-2).